We begin with the raw amino-acid sequence, 349 residues long: tRNA pseudouridine synthase D (349 aa).

A substrate-binding site is contributed by Phe26. The active-site Nucleophile is Asp79. Asn128 contributes to the substrate binding site. Positions 154 to 302 (GVPNYFGEQR…VEGCRRAILV (149 aa)) constitute a TRUD domain. Residue Phe328 coordinates substrate.

It belongs to the pseudouridine synthase TruD family.

The catalysed reaction is uridine(13) in tRNA = pseudouridine(13) in tRNA. Its function is as follows. Responsible for synthesis of pseudouridine from uracil-13 in transfer RNAs. This is tRNA pseudouridine synthase D from Photorhabdus laumondii subsp. laumondii (strain DSM 15139 / CIP 105565 / TT01) (Photorhabdus luminescens subsp. laumondii).